Consider the following 317-residue polypeptide: Protoheme IX farnesyltransferase (317 aa).

9 consecutive transmembrane segments (helical) span residues 36-56 (VMVL…ATVN), 57-77 (PVIA…SGCL), 108-128 (LAFG…ASNW), 129-149 (LAAG…SMWL), 157-177 (IVIG…AVTG), 184-204 (LVLF…LALV), 230-247 (IIWY…PVWL), 251-273 (GWLY…VQVY), and 284-304 (AAMG…SALL).

This sequence belongs to the UbiA prenyltransferase family. Protoheme IX farnesyltransferase subfamily.

It is found in the cell inner membrane. It catalyses the reaction heme b + (2E,6E)-farnesyl diphosphate + H2O = Fe(II)-heme o + diphosphate. It functions in the pathway porphyrin-containing compound metabolism; heme O biosynthesis; heme O from protoheme: step 1/1. In terms of biological role, converts heme B (protoheme IX) to heme O by substitution of the vinyl group on carbon 2 of heme B porphyrin ring with a hydroxyethyl farnesyl side group. The sequence is that of Protoheme IX farnesyltransferase from Methylorubrum extorquens (strain CM4 / NCIMB 13688) (Methylobacterium extorquens).